A 180-amino-acid chain; its full sequence is Nascent polypeptide-associated complex subunit alpha (180 aa).

Residues 16–80 form the NAC-A/B domain; that stretch reads SKNEKKAREL…AKVDDMNKRI (65 aa). Residues 81-113 are disordered; sequence AEAQQQQAQQDALSKAAGETGEAGEEDKSQDAI. Residues 82-100 show a composition bias toward low complexity; sequence EAQQQQAQQDALSKAAGET. One can recognise a UBA domain in the interval 142–179; the sequence is LDAKDIDIIVEQTQVSRAKAVKALRVHDGDMVNAIMEL.

It belongs to the NAC-alpha family. Part of the nascent polypeptide-associated complex (NAC), consisting of EGD2 and EGD1. NAC associates with ribosomes via EGD1.

It is found in the cytoplasm. It localises to the nucleus. In terms of biological role, component of the nascent polypeptide-associated complex (NAC), a dynamic component of the ribosomal exit tunnel, protecting the emerging polypeptides from interaction with other cytoplasmic proteins to ensure appropriate nascent protein targeting. The NAC complex also promotes mitochondrial protein import by enhancing productive ribosome interactions with the outer mitochondrial membrane and blocks the inappropriate interaction of ribosomes translating non-secretory nascent polypeptides with translocation sites in the membrane of the endoplasmic reticulum. EGD2 may also be involved in transcription regulation. The polypeptide is Nascent polypeptide-associated complex subunit alpha (EGD2) (Debaryomyces hansenii (strain ATCC 36239 / CBS 767 / BCRC 21394 / JCM 1990 / NBRC 0083 / IGC 2968) (Yeast)).